We begin with the raw amino-acid sequence, 336 residues long: Ferredoxin--NADP reductase 1 (336 aa).

FAD contacts are provided by E37, K45, F50, V90, L125, D287, and T328.

This sequence belongs to the ferredoxin--NADP reductase type 2 family. Homodimer. FAD serves as cofactor.

The catalysed reaction is 2 reduced [2Fe-2S]-[ferredoxin] + NADP(+) + H(+) = 2 oxidized [2Fe-2S]-[ferredoxin] + NADPH. This Bacillus subtilis (strain 168) protein is Ferredoxin--NADP reductase 1 (ycgT).